Consider the following 305-residue polypeptide: Deoxyribonuclease gamma (305 aa).

Positions 1 to 20 (MSRELAPLLLLLLSIHSALA) are cleaved as a signal peptide. A Bipartite nuclear localization signal motif is present at residues 35-51 (KQEDKNAMDVIVKVIKR). Residues E100 and H155 contribute to the active site. A disulfide bridge links C194 with C231. Positions 284-305 (SRAFTNSKKSVTLRKKTKSKRS) are not required for free DNA-nuclease activity but required for activity towards liposome-coated DNA. The Nuclear localization signal motif lies at 296–304 (LRKKTKSKR).

It belongs to the DNase I family. Ca(2+) serves as cofactor. It depends on Mg(2+) as a cofactor. Post-translationally, poly-ADP-ribosylated by PARP1. ADP-ribosylation negatively regulates enzymatic activity during apoptosis. Liver and spleen.

The protein resides in the nucleus. The protein localises to the endoplasmic reticulum. It localises to the secreted. Its activity is regulated as follows. Inhibited by zinc. Has DNA hydrolytic activity. Is capable of both single- and double-stranded DNA cleavage, producing DNA fragments with 3'-OH ends. Can cleave chromatin to nucleosomal units and cleaves nucleosomal and liposome-coated DNA. Acts in internucleosomal DNA fragmentation (INDF) during apoptosis and necrosis. The role in apoptosis includes myogenic and neuronal differentiation, and BCR-mediated clonal deletion of self-reactive B cells. Is active on chromatin in apoptotic cell-derived membrane-coated microparticles and thus suppresses anti-DNA autoimmunity. Together with DNASE1, plays a key role in degrading neutrophil extracellular traps (NETs). NETs are mainly composed of DNA fibers and are released by neutrophils to bind pathogens during inflammation. Degradation of intravascular NETs by DNASE1 and DNASE1L3 is required to prevent formation of clots that obstruct blood vessels and cause organ damage following inflammation. This Homo sapiens (Human) protein is Deoxyribonuclease gamma.